The sequence spans 230 residues: Ion-translocating oxidoreductase complex subunit E (230 aa).

Helical transmembrane passes span 18-38 (ALVQ…ATNA), 39-59 (LGLG…VSAL), 63-83 (TPAE…VSAV), 86-106 (LINA…PLIV), 125-145 (WLSA…MFVL), and 182-202 (PFLL…MLAV).

Belongs to the NqrDE/RnfAE family. The complex is composed of six subunits: RsxA, RsxB, RsxC, RsxD, RsxE and RsxG.

The protein localises to the cell inner membrane. Functionally, part of a membrane-bound complex that couples electron transfer with translocation of ions across the membrane. Required to maintain the reduced state of SoxR. The chain is Ion-translocating oxidoreductase complex subunit E from Salmonella arizonae (strain ATCC BAA-731 / CDC346-86 / RSK2980).